Reading from the N-terminus, the 353-residue chain is Ig alpha-1 chain C region (353 aa).

The Ig-like 1 domain maps to 6 to 98 (PKVFPLSLCS…HYTNPSQDVT (93 aa)). 2 disulfides stabilise this stretch: Cys-26/Cys-85 and Cys-77/Cys-101. The segment at 96–121 (DVTVPCRVPSTPPTPSPSTPPTPSPP) is disordered. Positions 105–121 (STPPTPSPSTPPTPSPP) are enriched in pro residues. 3 disulfides stabilise this stretch: Cys-123–Cys-180, Cys-147–Cys-204, and Cys-250–Cys-313. Ig-like domains are found at residues 125-220 (PRLS…ATLS) and 228-330 (PEVH…KTID). Asn-144 carries an N-linked (GlcNAc...) asparagine glycan. Asn-340 carries an N-linked (GlcNAc...) asparagine glycan. Cys-352 is a 3-hydroxy-L-kynurenine binding site.

Monomeric or polymeric. Post-translationally, 3-Hydroxykynurenine, an oxidized tryptophan metabolite that is common in biological fluids, reacts with alpha-1-microglobulin to form heterogeneous polycyclic chromophores including hydroxanthommatin. The chromophore reacts with accessible cysteines forming non-reducible thioether cross-links with Ig alpha-1 chain C region Cys-352.

In terms of biological role, ig alpha is the major immunoglobulin class in body secretions. It may serve both to defend against local infection and to prevent access of foreign antigens to the general immunologic system. The chain is Ig alpha-1 chain C region (IGHA1) from Gorilla gorilla gorilla (Western lowland gorilla).